The primary structure comprises 309 residues: Malate dehydrogenase (309 aa).

Residues Gly9–Gly14 and Asp33 each bind NAD(+). Arg82 and Arg88 together coordinate substrate. NAD(+) contacts are provided by residues Asn95 and Val118–Asn120. Positions 120 and 151 each coordinate substrate. Catalysis depends on His175, which acts as the Proton acceptor.

This sequence belongs to the LDH/MDH superfamily. MDH type 3 family.

It carries out the reaction (S)-malate + NAD(+) = oxaloacetate + NADH + H(+). In terms of biological role, catalyzes the reversible oxidation of malate to oxaloacetate. This is Malate dehydrogenase from Thermomicrobium roseum (strain ATCC 27502 / DSM 5159 / P-2).